We begin with the raw amino-acid sequence, 407 residues long: Arginine biosynthesis bifunctional protein ArgJ (407 aa).

Residues T157, K183, T194, E280, N402, and T407 each contribute to the substrate site. T194 serves as the catalytic Nucleophile.

Belongs to the ArgJ family. As to quaternary structure, heterotetramer of two alpha and two beta chains.

It localises to the cytoplasm. The catalysed reaction is N(2)-acetyl-L-ornithine + L-glutamate = N-acetyl-L-glutamate + L-ornithine. It catalyses the reaction L-glutamate + acetyl-CoA = N-acetyl-L-glutamate + CoA + H(+). It participates in amino-acid biosynthesis; L-arginine biosynthesis; L-ornithine and N-acetyl-L-glutamate from L-glutamate and N(2)-acetyl-L-ornithine (cyclic): step 1/1. Its pathway is amino-acid biosynthesis; L-arginine biosynthesis; N(2)-acetyl-L-ornithine from L-glutamate: step 1/4. Catalyzes two activities which are involved in the cyclic version of arginine biosynthesis: the synthesis of N-acetylglutamate from glutamate and acetyl-CoA as the acetyl donor, and of ornithine by transacetylation between N(2)-acetylornithine and glutamate. The sequence is that of Arginine biosynthesis bifunctional protein ArgJ from Bacillus anthracis.